Here is a 343-residue protein sequence, read N- to C-terminus: Stimulator of interferon genes protein homolog (343 aa).

Residue asparagine 84 is glycosylated (N-linked (GlcNAc...) asparagine). A run of 2 helical transmembrane segments spans residues 87–107 and 109–129; these read IYLI…TGNY and NVMP…WSFT. Asparagine 157 serves as a coordination point for 3',2'-cGAMP. Asparagine 187 carries an N-linked (GlcNAc...) asparagine glycan. Residues 195-215 traverse the membrane as a helical segment; the sequence is LVILIPDEMFVNGVLESHLLD. 3',2'-cGAMP-binding residues include arginine 232, lysine 235, glutamate 255, threonine 258, and serine 262. N-linked (GlcNAc...) asparagine glycans are attached at residues asparagine 270 and asparagine 333.

It belongs to the STING family.

It is found in the endoplasmic reticulum membrane. Its function is as follows. Facilitator of innate immune signaling that binds cyclic dinucleotides produced in response to infection by bacteria and/or viruses, and promotes the activation of the NF-kappa-B transcription factor Rel (Relish). Recognizes and binds cyclic di-GMP (c-di-GMP), a cyclic dinucleotide messenger produced by bacteria such as L.monocytogenes, leading to activation of the peptidoglycan recognition protein (IMD) signaling pathway and activation of Rel (Relish). Innate immune response is triggered in response to double-stranded RNA from viruses delivered to the cytoplasm: Sting acts by specifically binding cyclic dinucleotides 3',2'-cGAMP and 2',3'-cGAMP produced by cGlr1 and cGlr2 in response to RNA virus in the cytosol. Has a strong preference for 3',2'-cGAMP compared to other cyclic dinucleotides such as 2',3'-cGAMP or 3'3'-c-di-GMP. Upon binding to 3',2'-cGAMP, activates an antiviral immune response, leading to the activation of Rel (Relish). Activated in brain in response to Zika virus infection, leading to autophagy. In Drosophila melanogaster (Fruit fly), this protein is Stimulator of interferon genes protein homolog.